The primary structure comprises 425 residues: Adenylosuccinate synthetase (425 aa).

Residues 12 to 18 (GDEGKGK) and 40 to 42 (GHT) contribute to the GTP site. Aspartate 13 (proton acceptor) is an active-site residue. Mg(2+) contacts are provided by aspartate 13 and glycine 40. IMP is bound by residues 13–16 (DEGK), 38–41 (NAGH), threonine 130, arginine 144, glutamine 224, threonine 239, and arginine 301. Histidine 41 functions as the Proton donor in the catalytic mechanism. A substrate-binding site is contributed by 297 to 303 (TVSNRRR). Residues arginine 303, 329–331 (KLD), and 411–413 (STS) contribute to the GTP site.

Belongs to the adenylosuccinate synthetase family. Homodimer. It depends on Mg(2+) as a cofactor.

It is found in the cytoplasm. It carries out the reaction IMP + L-aspartate + GTP = N(6)-(1,2-dicarboxyethyl)-AMP + GDP + phosphate + 2 H(+). It participates in purine metabolism; AMP biosynthesis via de novo pathway; AMP from IMP: step 1/2. Functionally, plays an important role in the de novo pathway of purine nucleotide biosynthesis. Catalyzes the first committed step in the biosynthesis of AMP from IMP. This chain is Adenylosuccinate synthetase, found in Wolbachia pipientis subsp. Culex pipiens (strain wPip).